The chain runs to 487 residues: N-succinylglutamate 5-semialdehyde dehydrogenase (487 aa).

Residues 1 to 23 (MTHFIKGQWQAGKGHDVTSSNPA) form a disordered region. Position 220–225 (220–225 (GSSRTG)) interacts with NAD(+). Active-site residues include glutamate 243 and cysteine 277.

This sequence belongs to the aldehyde dehydrogenase family. AstD subfamily.

The catalysed reaction is N-succinyl-L-glutamate 5-semialdehyde + NAD(+) + H2O = N-succinyl-L-glutamate + NADH + 2 H(+). Its pathway is amino-acid degradation; L-arginine degradation via AST pathway; L-glutamate and succinate from L-arginine: step 4/5. Catalyzes the NAD-dependent reduction of succinylglutamate semialdehyde into succinylglutamate. The sequence is that of N-succinylglutamate 5-semialdehyde dehydrogenase from Shewanella sp. (strain ANA-3).